The chain runs to 376 residues: Transcriptional regulator STP4 (376 aa).

Disordered regions lie at residues 25–58 (QNYCSIKSPSPTSTPTSTSLTMTSPPQLHNPHAS), 89–122 (SSNSPTPSNSSYSPTLLIPSNDRPASSSVYSNSS), and 137–210 (VNCI…NWKP). 2 stretches are compositionally biased toward low complexity: residues 32–50 (SPSPTSTPTSTSLTMTSPP) and 89–103 (SSNSPTPSNSSYSPT). 2 stretches are compositionally biased toward polar residues: residues 146 to 183 (PRSTSNLTENSEQSFTSQQSHPAISSNATITSPQLSVK) and 191 to 200 (EPQNSNTIIS). The segment at 241–263 (HICKYCERGFARPNDLFRHVKCH) adopts a C2H2-type zinc-finger fold.

It is found in the nucleus. Functionally, probable transcription factor involved in response to cell wall damage. The sequence is that of Transcriptional regulator STP4 (STP4) from Candida albicans (strain SC5314 / ATCC MYA-2876) (Yeast).